A 294-amino-acid chain; its full sequence is 4-hydroxy-tetrahydrodipicolinate synthase (294 aa).

Residue Thr47 participates in pyruvate binding. Catalysis depends on Tyr135, which acts as the Proton donor/acceptor. Lys163 functions as the Schiff-base intermediate with substrate in the catalytic mechanism. Val205 is a binding site for pyruvate.

It belongs to the DapA family. As to quaternary structure, homotetramer; dimer of dimers.

The protein resides in the cytoplasm. The catalysed reaction is L-aspartate 4-semialdehyde + pyruvate = (2S,4S)-4-hydroxy-2,3,4,5-tetrahydrodipicolinate + H2O + H(+). It functions in the pathway amino-acid biosynthesis; L-lysine biosynthesis via DAP pathway; (S)-tetrahydrodipicolinate from L-aspartate: step 3/4. Its function is as follows. Catalyzes the condensation of (S)-aspartate-beta-semialdehyde [(S)-ASA] and pyruvate to 4-hydroxy-tetrahydrodipicolinate (HTPA). This Rickettsia bellii (strain RML369-C) protein is 4-hydroxy-tetrahydrodipicolinate synthase.